A 148-amino-acid polypeptide reads, in one-letter code: Single-stranded DNA-binding protein, mitochondrial (148 aa).

Residues 1–16 constitute a mitochondrion transit peptide; that stretch reads MFRRPVLQVLRQFVRH. One can recognise an SSB domain in the interval 30–141; the sequence is LNRVHLLGRV…IIADNIIFLS (112 aa). Ser-67 and Ser-79 each carry phosphoserine. Lys-113 is subject to N6-acetyllysine. Lys-122 bears the N6-succinyllysine mark.

In terms of assembly, homotetramer. Interacts with MPG/AAG, through inhibition of its glycosylase activity it potentially prevents formation of DNA breaks in ssDNA, ensuring that base removal primarily occurs in dsDNA. Interacts with POLDIP2. Interacts with PRIMPOL.

Its subcellular location is the mitochondrion. The protein resides in the mitochondrion matrix. The protein localises to the mitochondrion nucleoid. Binds preferentially and cooperatively to pyrimidine rich single-stranded DNA (ss-DNA). In vitro, required to maintain the copy number of mitochondrial DNA (mtDNA) and plays a crucial role during mtDNA replication by stimulating the activity of the replisome components POLG and TWNK at the replication fork. Promotes the activity of the gamma complex polymerase POLG, largely by organizing the template DNA and eliminating secondary structures to favor ss-DNA conformations that facilitate POLG activity. In addition it is able to promote the 5'-3' unwinding activity of the mtDNA helicase TWNK. May also function in mtDNA repair. This Pongo abelii (Sumatran orangutan) protein is Single-stranded DNA-binding protein, mitochondrial (SSBP1).